A 156-amino-acid polypeptide reads, in one-letter code: Sec-independent protein translocase protein TatB (156 aa).

A helical transmembrane segment spans residues 2–22 (FSSVGWGEIFLLVVVGLVVIG). The interval 100–156 (KIMAEGTEGEAQRNKQAADNNANVVERPADGSTARPTQNDPKDGPNYSGGVSWTDII) is disordered. Polar residues predominate over residues 113–122 (NKQAADNNAN).

It belongs to the TatB family. The Tat system comprises two distinct complexes: a TatABC complex, containing multiple copies of TatA, TatB and TatC subunits, and a separate TatA complex, containing only TatA subunits. Substrates initially bind to the TatABC complex, which probably triggers association of the separate TatA complex to form the active translocon.

The protein localises to the cell membrane. Part of the twin-arginine translocation (Tat) system that transports large folded proteins containing a characteristic twin-arginine motif in their signal peptide across membranes. Together with TatC, TatB is part of a receptor directly interacting with Tat signal peptides. TatB may form an oligomeric binding site that transiently accommodates folded Tat precursor proteins before their translocation. This chain is Sec-independent protein translocase protein TatB, found in Corynebacterium glutamicum (strain ATCC 13032 / DSM 20300 / JCM 1318 / BCRC 11384 / CCUG 27702 / LMG 3730 / NBRC 12168 / NCIMB 10025 / NRRL B-2784 / 534).